The following is an 865-amino-acid chain: MEALGSSDCNLEILETLSDDAIQEITESYDGFFTTVESLIAGTGDSLVEDEFVSHVYCLCKYGLDSLVRDHFLRSLEQAFEKGGASSFWQHFDAYSEKKHHNYGEEIQIVLCKALEEISIEKQYHEKCLSIVVHALQSFKEQSSDDRQNSDTERVHLFSRFQSMLSSTLMTTLPQHFPEILHWYFKERLEELSAIMDGDGIEEQEDDCMDLDEKLRYKNGEMDVDEGCSQGKRLGHDKLVKNIGKVVRDLRSIGFTSMAENAYASAIFLLLKAKVHDLAGDDYRTSVLESIKEWIQTVPLQFLNALLSYLGDSVSYGTTSSGLTSPLACCPSPSFSRVVTPSEGIVRWKLRLEYFAYETLQDLRIAKLFEIIVDYPESSPAIEDLKQCLEYTGQHSKLVESFISSLKYRLLTAGASTNDILHQYVSTIKALRAIDPAGVFLEAVGEPIRDYLRGRKDTIKCIVTMLTDGSGGNANGSGNPGDSLLEELMRDEESQENVGFDDDFHTDDKQAWINASRWEPDPVEADPLKGSLSQRKVDILGMLVDIIGSKEQLVNEYRVMLAEKLLNKTDYDIDTEIRTVELLKIHFGEASMQRCEIMLNDLIDSKRVNTNIKKASQTGAELRENELSVDTLTSTILSTNFWPPIQDEPLELPGPVDKLLSDYANRYHEIKTPRKLLWKKNLGTVKLELQFEDRAMQFTVSPTHAAIIMQFQEKKSWTYKDLAEVIGIPIDALNRRVNFWISKGVLRESTGANSNSSVLTLVESITDSGKNEGEELLTGEEEGETSIASVEDQLRKEMTIYEKFIMGMLTNFGSMALERIHNTLKMFCVADPSYDKSLQQLQSFLSGLVSEEKLEFRDGMYLLKK.

This sequence belongs to the cullin family. As to quaternary structure, the APC/C is composed of at least 10 subunits. Interacts with APC8, APC11, CDC27A and CDC27B. In terms of tissue distribution, highly expressed in immature flowers. Expressed in stems, leaves and flowers.

It is found in the nucleus. The protein operates within protein modification; protein ubiquitination. Its function is as follows. Component of the anaphase promoting complex/cyclosome (APC/C), a cell cycle-regulated E3 ubiquitin-protein ligase complex that controls progression through mitosis and the G1 phase of the cell cycle. The APC/C complex controls several key steps in the cell cycle by mediating ubiquitination and subsequent degradation of target proteins such as cyclins. The APC/C complex is required for the female gametophyte development and is involved in several aspect of development by controlling cell division and cell elongation. Involved in the control of endoreduplication. This chain is Anaphase-promoting complex subunit 2 (APC2), found in Arabidopsis thaliana (Mouse-ear cress).